A 459-amino-acid polypeptide reads, in one-letter code: Tubulin gamma chain (459 aa).

Residue 142 to 148 (AGGTGSG) coordinates GTP. Residues 440–459 (ADYLTKETAPTDEAEDKRAG) form a disordered region.

It belongs to the tubulin family.

It localises to the cytoplasm. It is found in the cytoskeleton. The protein localises to the microtubule organizing center. The protein resides in the spindle pole body. Functionally, tubulin is the major constituent of microtubules. The gamma chain is found at microtubule organizing centers (MTOC) such as the spindle poles or the centrosome, suggesting that it is involved in the minus-end nucleation of microtubule assembly. This chain is Tubulin gamma chain (TUB4), found in Cochliobolus heterostrophus (strain C5 / ATCC 48332 / race O) (Southern corn leaf blight fungus).